Here is a 550-residue protein sequence, read N- to C-terminus: Mitochondrial distribution and morphology protein 12 (550 aa).

Positions 1-550 (MSIELNWETL…VYPSFWTFLV (550 aa)) constitute an SMP-LTD domain. Disordered regions lie at residues 62-168 (ITDP…PQDL), 218-356 (PPQW…TKYR), and 474-493 (TLASPAGAAPGSDEKAGGNT). Residues 69–90 (FYEEDPDVDYDDEDEDVEETHD) are compositionally biased toward acidic residues. Over residues 125 to 140 (VASSSSSSVGRGSAPR) the composition is skewed to low complexity. Composition is skewed to polar residues over residues 148–157 (PTKSNININT), 251–269 (PSHSRTSSTVSNADLQTAS), 278–289 (TPTSFLRSGQQT), and 296–323 (VSTLAPTSVGTSRPPTRDLTTTMSTAQE).

It belongs to the MDM12 family. In terms of assembly, component of the ER-mitochondria encounter structure (ERMES) or MDM complex, composed of MMM1, MDM10, MDM12 and MDM34. An MMM1 homodimer associates with one molecule of MDM12 on each side in a pairwise head-to-tail manner, and the SMP-LTD domains of MMM1 and MDM12 generate a continuous hydrophobic tunnel for phospholipid trafficking.

Its subcellular location is the mitochondrion outer membrane. The protein localises to the endoplasmic reticulum membrane. In terms of biological role, component of the ERMES/MDM complex, which serves as a molecular tether to connect the endoplasmic reticulum (ER) and mitochondria. Components of this complex are involved in the control of mitochondrial shape and protein biogenesis, and function in nonvesicular lipid trafficking between the ER and mitochondria. MDM12 is required for the interaction of the ER-resident membrane protein MMM1 and the outer mitochondrial membrane-resident beta-barrel protein MDM10. The MDM12-MMM1 subcomplex functions in the major beta-barrel assembly pathway that is responsible for biogenesis of all mitochondrial outer membrane beta-barrel proteins, and acts in a late step after the SAM complex. The MDM10-MDM12-MMM1 subcomplex further acts in the TOM40-specific pathway after the action of the MDM12-MMM1 complex. Essential for establishing and maintaining the structure of mitochondria and maintenance of mtDNA nucleoids. This chain is Mitochondrial distribution and morphology protein 12, found in Pyricularia oryzae (strain 70-15 / ATCC MYA-4617 / FGSC 8958) (Rice blast fungus).